Here is a 411-residue protein sequence, read N- to C-terminus: Multifunctional CCA protein (411 aa).

2 residues coordinate ATP: G8 and R11. CTP-binding residues include G8 and R11. Mg(2+)-binding residues include D21 and D23. Residues R91, R137, and R140 each contribute to the ATP site. The CTP site is built by R91, R137, and R140. The region spanning 226–327 (TGVHVMLVID…LRFLQETDAL (102 aa)) is the HD domain.

Belongs to the tRNA nucleotidyltransferase/poly(A) polymerase family. Bacterial CCA-adding enzyme type 1 subfamily. Monomer. Can also form homodimers and oligomers. The cofactor is Mg(2+). Ni(2+) is required as a cofactor.

It carries out the reaction a tRNA precursor + 2 CTP + ATP = a tRNA with a 3' CCA end + 3 diphosphate. The enzyme catalyses a tRNA with a 3' CCA end + 2 CTP + ATP = a tRNA with a 3' CCACCA end + 3 diphosphate. Functionally, catalyzes the addition and repair of the essential 3'-terminal CCA sequence in tRNAs without using a nucleic acid template. Adds these three nucleotides in the order of C, C, and A to the tRNA nucleotide-73, using CTP and ATP as substrates and producing inorganic pyrophosphate. tRNA 3'-terminal CCA addition is required both for tRNA processing and repair. Also involved in tRNA surveillance by mediating tandem CCA addition to generate a CCACCA at the 3' terminus of unstable tRNAs. While stable tRNAs receive only 3'-terminal CCA, unstable tRNAs are marked with CCACCA and rapidly degraded. This chain is Multifunctional CCA protein, found in Methylobacillus flagellatus (strain ATCC 51484 / DSM 6875 / VKM B-1610 / KT).